The following is a 363-amino-acid chain: uncharacterized protein (363 aa).

The tract at residues 35 to 262 (TVPGPPGAES…GLSPCCGDGG (228 aa)) is disordered. The segment covering 56-75 (AVSSSRNPNSAGRTPNSYLT) has biased composition (polar residues). Over residues 100–116 (GADPALGSLPAAGLSGL) the composition is skewed to low complexity.

This is an uncharacterized protein from Homo sapiens (Human).